We begin with the raw amino-acid sequence, 793 residues long: ABC transporter G family member 1 (793 aa).

Residues 1–20 are compositionally biased toward low complexity; it reads MDSNNNNNNENEAFSGASES. The interval 1–96 is disordered; it reads MDSNNNNNNE…NNNQNNNIIN (96 aa). Residues 21 to 37 show a composition bias toward basic and acidic residues; sequence SEFRKIVEENENEREFE. The segment covering 59–68 has biased composition (polar residues); it reads ETINPNISLD. The stretch at 67 to 102 forms a coiled coil; that stretch reads LDNNNNNNQNNQNNQNNNNNNNNQNNNIINNLNKKN. Residues 69 to 96 are compositionally biased toward low complexity; it reads NNNNNNQNNQNNQNNNNNNNNQNNNIIN. The 242-residue stretch at 123 to 364 folds into the ABC transporter domain; sequence VQITEKGKKK…FNANGYHCSE (242 aa). Residue 156 to 163 coordinates ATP; the sequence is GPSGAGKT. Residues 382 to 398 show a composition bias toward acidic residues; the sequence is DQADSDDDDYNDEEEEI. The segment at 382–457 is disordered; the sequence is DQADSDDDDY…QSTDGRARRR (76 aa). Over residues 399–413 the composition is skewed to gly residues; the sequence is GGGGGGSGGGAGGIE. Residues 421 to 437 are compositionally biased toward polar residues; sequence PTMNGSAVDNIKNNELK. Over residues 438–448 the composition is skewed to low complexity; that stretch reads QQQQQQQQQQQ. Residues 527 to 785 enclose the ABC transmembrane type-2 domain; it reads MAFKVNLIQA…VLTFLVLKLK (259 aa). Transmembrane regions (helical) follow at residues 533 to 553, 563 to 583, 610 to 630, 647 to 667, 674 to 694, 701 to 721, and 764 to 784; these read LIQA…LGLG, VVAF…IHVF, FMDA…VYWM, FVLM…LISS, VGTA…GFFI, GWLV…AAVI, and VWIL…VLKL.

The protein belongs to the ABC transporter superfamily. ABCG family.

Its subcellular location is the membrane. The protein is ABC transporter G family member 1 (abcG1) of Dictyostelium discoideum (Social amoeba).